We begin with the raw amino-acid sequence, 154 residues long: Superoxide dismutase [Cu-Zn] (154 aa).

Cu cation-binding residues include histidine 47 and histidine 64. The cysteines at positions 58 and 147 are disulfide-linked. Positions 64, 72, 81, and 84 each coordinate Zn(2+). Histidine 121 contacts Cu cation. Arginine 144 provides a ligand contact to substrate.

The protein belongs to the Cu-Zn superoxide dismutase family. Homodimer. Requires Cu cation as cofactor. Zn(2+) is required as a cofactor.

The protein localises to the cytoplasm. The enzyme catalyses 2 superoxide + 2 H(+) = H2O2 + O2. Functionally, destroys radicals which are normally produced within the cells and which are toxic to biological systems. This chain is Superoxide dismutase [Cu-Zn] (SOD1), found in Pleurocordyceps sinensis (Polycephalomyces sinensis).